Here is a 316-residue protein sequence, read N- to C-terminus: 4-hydroxy-3-methylbut-2-enyl diphosphate reductase (316 aa).

Cysteine 12 is a binding site for [4Fe-4S] cluster. The (2E)-4-hydroxy-3-methylbut-2-enyl diphosphate site is built by histidine 41 and histidine 74. Residues histidine 41 and histidine 74 each coordinate dimethylallyl diphosphate. Histidine 41 and histidine 74 together coordinate isopentenyl diphosphate. Cysteine 96 contributes to the [4Fe-4S] cluster binding site. Histidine 124 contributes to the (2E)-4-hydroxy-3-methylbut-2-enyl diphosphate binding site. Histidine 124 lines the dimethylallyl diphosphate pocket. An isopentenyl diphosphate-binding site is contributed by histidine 124. The active-site Proton donor is glutamate 126. Residue threonine 167 participates in (2E)-4-hydroxy-3-methylbut-2-enyl diphosphate binding. Residue cysteine 197 coordinates [4Fe-4S] cluster. (2E)-4-hydroxy-3-methylbut-2-enyl diphosphate contacts are provided by serine 225, serine 226, asparagine 227, and serine 269. 4 residues coordinate dimethylallyl diphosphate: serine 225, serine 226, asparagine 227, and serine 269. The isopentenyl diphosphate site is built by serine 225, serine 226, asparagine 227, and serine 269.

Belongs to the IspH family. In terms of assembly, homodimer. It depends on [4Fe-4S] cluster as a cofactor.

It catalyses the reaction isopentenyl diphosphate + 2 oxidized [2Fe-2S]-[ferredoxin] + H2O = (2E)-4-hydroxy-3-methylbut-2-enyl diphosphate + 2 reduced [2Fe-2S]-[ferredoxin] + 2 H(+). The catalysed reaction is dimethylallyl diphosphate + 2 oxidized [2Fe-2S]-[ferredoxin] + H2O = (2E)-4-hydroxy-3-methylbut-2-enyl diphosphate + 2 reduced [2Fe-2S]-[ferredoxin] + 2 H(+). The protein operates within isoprenoid biosynthesis; dimethylallyl diphosphate biosynthesis; dimethylallyl diphosphate from (2E)-4-hydroxy-3-methylbutenyl diphosphate: step 1/1. It functions in the pathway isoprenoid biosynthesis; isopentenyl diphosphate biosynthesis via DXP pathway; isopentenyl diphosphate from 1-deoxy-D-xylulose 5-phosphate: step 6/6. Its function is as follows. Catalyzes the conversion of 1-hydroxy-2-methyl-2-(E)-butenyl 4-diphosphate (HMBPP) into a mixture of isopentenyl diphosphate (IPP) and dimethylallyl diphosphate (DMAPP). Acts in the terminal step of the DOXP/MEP pathway for isoprenoid precursor biosynthesis. This chain is 4-hydroxy-3-methylbut-2-enyl diphosphate reductase, found in Salmonella paratyphi C (strain RKS4594).